The sequence spans 384 residues: Lipid-A-disaccharide synthase (384 aa).

This sequence belongs to the LpxB family.

It catalyses the reaction a lipid X + a UDP-2-N,3-O-bis[(3R)-3-hydroxyacyl]-alpha-D-glucosamine = a lipid A disaccharide + UDP + H(+). It participates in bacterial outer membrane biogenesis; LPS lipid A biosynthesis. Functionally, condensation of UDP-2,3-diacylglucosamine and 2,3-diacylglucosamine-1-phosphate to form lipid A disaccharide, a precursor of lipid A, a phosphorylated glycolipid that anchors the lipopolysaccharide to the outer membrane of the cell. This chain is Lipid-A-disaccharide synthase, found in Cellvibrio japonicus (strain Ueda107) (Pseudomonas fluorescens subsp. cellulosa).